A 66-amino-acid chain; its full sequence is Small vasohibin-binding protein (66 aa).

Residues 1–23 show a composition bias toward basic and acidic residues; the sequence is MDPPARKEKTKVKESVSRVEKAK. A disordered region spans residues 1 to 31; that stretch reads MDPPARKEKTKVKESVSRVEKAKQKSAQQEL. A coiled-coil region spans residues 5 to 52; the sequence is ARKEKTKVKESVSRVEKAKQKSAQQELKQRQRAEIYALNRVMTELEQQ.

It belongs to the SVBP family. Interacts with VASH1 and VASH2.

It localises to the cytoplasm. It is found in the secreted. Its subcellular location is the cytoskeleton. Functionally, enhances the tyrosine carboxypeptidase activity of VASH1 and VASH2, thereby promoting the removal of the C-terminal tyrosine residue of alpha-tubulin. This activity is critical for spindle function and accurate chromosome segregation during mitosis since microtubule detyronisation regulates mitotic spindle length and postioning. Also required to enhance the solubility and secretion of VASH1 and VASH2. Plays a role in axon and excitatory synapse formation. The protein is Small vasohibin-binding protein of Homo sapiens (Human).